A 397-amino-acid polypeptide reads, in one-letter code: CCA-adding enzyme (397 aa).

The ATP site is built by Gly32 and Arg35. Residues Gly32 and Arg35 each coordinate CTP. Mg(2+) contacts are provided by Asp45 and Asp47. Residues Arg116, Asp159, Arg162, Arg165, and Arg168 each coordinate ATP. 5 residues coordinate CTP: Arg116, Asp159, Arg162, Arg165, and Arg168.

Belongs to the tRNA nucleotidyltransferase/poly(A) polymerase family. Bacterial CCA-adding enzyme type 3 subfamily. Homodimer. The cofactor is Mg(2+).

The catalysed reaction is a tRNA precursor + 2 CTP + ATP = a tRNA with a 3' CCA end + 3 diphosphate. The enzyme catalyses a tRNA with a 3' CCA end + 2 CTP + ATP = a tRNA with a 3' CCACCA end + 3 diphosphate. Functionally, catalyzes the addition and repair of the essential 3'-terminal CCA sequence in tRNAs without using a nucleic acid template. Adds these three nucleotides in the order of C, C, and A to the tRNA nucleotide-73, using CTP and ATP as substrates and producing inorganic pyrophosphate. tRNA 3'-terminal CCA addition is required both for tRNA processing and repair. Also involved in tRNA surveillance by mediating tandem CCA addition to generate a CCACCA at the 3' terminus of unstable tRNAs. While stable tRNAs receive only 3'-terminal CCA, unstable tRNAs are marked with CCACCA and rapidly degraded. The protein is CCA-adding enzyme of Levilactobacillus brevis (strain ATCC 367 / BCRC 12310 / CIP 105137 / JCM 1170 / LMG 11437 / NCIMB 947 / NCTC 947) (Lactobacillus brevis).